Reading from the N-terminus, the 213-residue chain is Small ribosomal subunit protein uS3 (213 aa).

The 69-residue stretch at 38 to 106 (IRAFVKKLLY…EFSLEVNEIR (69 aa)) folds into the KH type-2 domain.

It belongs to the universal ribosomal protein uS3 family. As to quaternary structure, part of the 30S ribosomal subunit. Forms a tight complex with proteins S10 and S14.

Its function is as follows. Binds the lower part of the 30S subunit head. Binds mRNA in the 70S ribosome, positioning it for translation. This chain is Small ribosomal subunit protein uS3, found in Desulfovibrio desulfuricans (strain ATCC 27774 / DSM 6949 / MB).